We begin with the raw amino-acid sequence, 61 residues long: uncharacterized protein (61 aa).

A helical membrane pass occupies residues 10-27 (RILFFFFIFFTLFLFNIP).

The protein resides in the membrane. This is an uncharacterized protein from Dictyostelium discoideum (Social amoeba).